The primary structure comprises 1206 residues: MWAVARLGLRLRASWWEAQAGRLMPGGGGGSAAAAAMQEEQGEQEGPTGRDLSNALYALGEGVVANTLWALQQLLAPARAEQEHPQEGRPQQQEQGGEARQEQQGQQAPRQLWWALLERSRQHMEATCVQQQGQGRGQAADGKSTSSRGAAGGGVAKAVARGPRGAGTARGPLGTAAAPLRRVLWGAGRQDVCVYLSGLRRLHMPPPPSLAVPLMQRLEQQLLAAEGEAQAEAAVPARAPPSTASTAAPPSARCLVYLAVELSHMGPLGPLGPLGPLGKAQAGGQQVPVQVQVPGVEADVGSLGARECADLCVALVRLGVSLPRGAGSGKATMPHPHPSPHLRYDEQPQLSGADLGPSADMAPLPLDTGERALPEPSSHPPVARQQLGEQPGEQPGGPHEDEEDWDPAFVADGYEAEAGELPKRPSASGGGMEGSFSLPQQLALAQSLHWLDQAAAHMMQTGAEDAASVDEEAEAPEADAVLAAALAAARDDTALYLFCSWAPSSLSSLSSLSATATATAAALRLRLTGAAHVVEGAALQAAAAALDAACWKQQGAGPGVVVGKDREVQAAAPAGPPGDLEAEQVVCAPCMCTGSIDTPDQPPAPNNLNNPHPSAFHRYQDHGDRLQVDVVRLTDELETQKLNLRDINEFLTNELKSKVAELNGLMDEVKKSHEASLARLRGDKDRELERLEGVVREHERKARITQEFLDKKEALEAEMQSLKETLARKTKDFEQQLTDIDRQHIQDREKWKREMAGRIKETKLQMMKLTDNQLEMTTKRTIMENEQMSIELSYQSRQTEKLLNKNNKLMEENAELRRQLELSKQTEEELARRNNLYQKTIKTLLSKLQDQGYQAAESEEVLGALDGRLGDLAAHLHLAQLQLEEKSAEADALRERLESKTAEAAALTSGYDDTARFLLACMADVRDKVVTVVRTTTTNNTSSDERLPPLAGADAAGGSRSGSPTPPGASSSAAGGGDITVLPGRLDELSPEQRERVLGWLLERLHYATGLSHGPLSQSSPAPLSAGGMGSALAGEWGPGSPGGSRLGRLPTREQDGSAGGMGGPQGLGATSGAAAAAAGAGGGLDGVSSLGGLGYGLGYGGVGVSSSVMAGMSPGPGVPGYSVSTGDVMPGGGMLGGAGVIGGGTGGGAGGAVVDEALAKVLSEVRPWGKRSEQQPLTTTKHSGTFLRKGNGPSNNTGSRGSLKV.

Disordered regions lie at residues 26-52 (GGGG…GRDL), 79-109 (RAEQ…QQAP), 125-173 (EATC…RGPL), and 327-405 (GSGK…EEDW). 3 stretches are compositionally biased toward low complexity: residues 88 to 109 (GRPQ…QQAP), 156 to 173 (AKAV…RGPL), and 385 to 397 (QQLG…QPGG). Coiled coils occupy residues 634–732 (TDEL…KTKD), 799–833 (TEKL…LARR), and 876–903 (LHLA…KTAE). Disordered stretches follow at residues 936-990 (TTTN…DELS), 1011-1072 (LSHG…GATS), and 1168-1206 (PWGK…SLKV). Low complexity-rich tracts occupy residues 951-973 (AGAD…SSSA) and 1014-1035 (GPLS…ALAG). Composition is skewed to gly residues over residues 1037 to 1046 (WGPGSPGGSR) and 1058 to 1067 (SAGGMGGPQG). 2 stretches are compositionally biased toward polar residues: residues 1175-1184 (QQPLTTTKHS) and 1193-1206 (GPSN…SLKV).

It belongs to the CFAP157 family.

The protein resides in the cell projection. The protein localises to the cilium. It localises to the flagellum. In Chlamydomonas reinhardtii (Chlamydomonas smithii), this protein is Cilia- and flagella-associated protein 157.